A 519-amino-acid chain; its full sequence is Major facilitator superfamily domain-containing protein 8 (519 aa).

Residues 1–25 (MANLGSEAEREPLLGPGSPGSREWS) are disordered. The Cytoplasmic segment spans residues 1–41 (MANLGSEAEREPLLGPGSPGSREWSEIETQEHYKSRWKSVR). A Dileucine internalization motif motif is present at residues 13-14 (LL). The chain crosses the membrane as a helical span at residues 42–62 (ILYLTMFLSSVGFSIVIMSIW). The Extracellular segment spans residues 63–75 (PYLQKIDQTADAS). Residues 76–96 (FLGWVIASYSLGQMVASPLFG) form a helical membrane-spanning segment. Residues 97–106 (LWSNYRPRKE) are Cytoplasmic-facing. Residues 107-127 (PLIVSISISVAANCLYAYVHV) traverse the membrane as a helical segment. Topologically, residues 128–140 (PAAHNKYYMLIAR) are extracellular. Residues 141–161 (GLVGFGAGNVAVVRSYIAGAT) traverse the membrane as a helical segment. Residues 162–174 (SLQERTNAMANTS) are Cytoplasmic-facing. Residues 175 to 195 (TCQALGFILGPVFQTCFALIG) form a helical membrane-spanning segment. At 196-212 (EKGVTWDIIKLQVNMYT) the chain is on the extracellular side. The chain crosses the membrane as a helical span at residues 213-233 (APVLLAAFLGILNIILILFIL). Over 234 to 267 (REHRVDDLGRQCKSVNFQEENTDEPQIPEGSIDQ) the chain is Cytoplasmic. A helical transmembrane segment spans residues 268–288 (VAVVATNIVFFVVLFIFAVYE). Topologically, residues 289–310 (TILTPLTLDMYAWTQEQAVLYD) are extracellular. The helical transmembrane segment at 311–331 (GILLVAFGVEAVLVFMGVKLL) threads the bilayer. Topologically, residues 332 to 338 (SKKIGER) are cytoplasmic. A helical membrane pass occupies residues 339 to 359 (AILLGGFVVVWVGFFILLPWG). The Extracellular portion of the chain corresponds to 360 to 416 (NQFPKIQWEDLHNSSTPNTTFGEIIIGLWNSSREDHSEQPTGCPIEQTWCLYTPVIH). N-linked (GlcNAc...) asparagine glycosylation is found at Asn-372 and Asn-377. Residues 417-439 (LAQFLTAAVLIGTGYPACSVMSY) traverse the membrane as a helical segment. The Cytoplasmic segment spans residues 440–452 (TLYSKVLGPKPQG). A helical membrane pass occupies residues 453–473 (IYMGWLTTSGSAARILGPVFI). The Extracellular portion of the chain corresponds to 474–483 (SHVYTYLGPR). Residues 484–504 (WAFSLVCGIVVLTILLIGAVY) traverse the membrane as a helical segment. The Cytoplasmic portion of the chain corresponds to 505 to 519 (KRLVAFSVRYMRIQE).

Belongs to the major facilitator superfamily.

The protein resides in the endosome membrane. It is found in the lysosome membrane. The catalysed reaction is chloride(in) = chloride(out). It catalyses the reaction iodide(out) = iodide(in). It carries out the reaction fluoride(in) = fluoride(out). Outward-rectifying chloride channel involved in endolysosomal chloride homeostasis, membrane fusion and function. Conducts chloride currents up to hundreds of picoamperes. Regulates lysosomal calcium content by reducing the lysosomal membrane potential, thereby activating TRPML1 channel and further release of lysosomal calcium ions. Regulates the pH in endolysosomal compartments and may contribute to progressive acidification from endosome to lysosome. Permeable to other halides such as iodide and fluoride ions. This is Major facilitator superfamily domain-containing protein 8 from Mus musculus (Mouse).